Here is a 531-residue protein sequence, read N- to C-terminus: RCC1 and BTB domain-containing protein 1 (531 aa).

RCC1 repeat units lie at residues 40–91 (NDEV…LLST), 93–145 (DGVV…ALAA), 147–198 (GEVF…AVLD), 199–250 (NGEV…ALTD), 252–302 (GLLY…AAKT), and 304–356 (GGHV…FLTV). 2 consecutive BTB domains span residues 370-437 (ADLK…DLPP) and 470-499 (ENAF…INHL).

In terms of tissue distribution, ubiquitously expressed. In the retina, present in the nerve fiber layer and to a lesser extent in the inner and outer plexiform layers (at protein level).

It localises to the nucleus. Functionally, may be involved in cell cycle regulation by chromatin remodeling. This Homo sapiens (Human) protein is RCC1 and BTB domain-containing protein 1 (RCBTB1).